Here is a 238-residue protein sequence, read N- to C-terminus: 1-(5-phosphoribosyl)-5-[(5-phosphoribosylamino)methylideneamino] imidazole-4-carboxamide isomerase (238 aa).

Aspartate 8 (proton acceptor) is an active-site residue. Aspartate 129 (proton donor) is an active-site residue.

Belongs to the HisA/HisF family.

Its subcellular location is the cytoplasm. The enzyme catalyses 1-(5-phospho-beta-D-ribosyl)-5-[(5-phospho-beta-D-ribosylamino)methylideneamino]imidazole-4-carboxamide = 5-[(5-phospho-1-deoxy-D-ribulos-1-ylimino)methylamino]-1-(5-phospho-beta-D-ribosyl)imidazole-4-carboxamide. The protein operates within amino-acid biosynthesis; L-histidine biosynthesis; L-histidine from 5-phospho-alpha-D-ribose 1-diphosphate: step 4/9. The protein is 1-(5-phosphoribosyl)-5-[(5-phosphoribosylamino)methylideneamino] imidazole-4-carboxamide isomerase of Anaeromyxobacter dehalogenans (strain 2CP-1 / ATCC BAA-258).